We begin with the raw amino-acid sequence, 134 residues long: MTIRPAYRPKIVKKRTKHFIRHQSDRYAKLSHKWRKPKGIDNRVRRRFKGQYLMPNIGYGSNKRTRHMLPTGFKKFLVHNVRELEVLLMQNREYCGEIAHGVSSNKRKEIVERAKQLSVRLTNPNARLRSQENE.

The protein belongs to the eukaryotic ribosomal protein eL32 family.

The protein is Large ribosomal subunit protein eL32 (RpL32) of Drosophila acanthoptera (Fruit fly).